The chain runs to 887 residues: MHSREIRQSFLDFFAAKSHTIVRSAPVIPADDPTLLFTNAGMNQFKDVFLAKGTRPYTRAADTQKCIRASGKHNDLEDVGRDTYHHTFFEMLGNWSFGDYYKEEAISWAWELLTEVWKLPADRLYATVYHDDDESARIWAEKTSIEPSHILRFGDKDNFWEMGETGPCGPCSEIHIDLTPDGSGKELVNAGDHRAIELWNLVFIQYDRQPDGRLEPLPQRHVDTGMGFERVCAVMQSKASNYDTDVFLPLFQRLSELTGVTYGASMDGRQDIAMRVIADHARTLTFALSDGAMPSNEGRGYVLRRILRRALRYSRDLGCSGPILHQLVGTLADSMGDVFGELRDRRDAVERIIRAEEESFITTLDRGMEIFGELAAATARAGGRMLKGEDAFKLYDTYGFPFDLTRLLATEAGLDVDGEGFEHCMQEQKSRARSDRREKQQTGDGAGSWQWFSDSHATTFLGYDRLAMPSTIIGAAHASGHLLLVLAETPFYAESGGQTGDRGWLESAAYRMQVTDTRKDGDSFVHVVSRAFDKVRDTEIDPMDIVIEEATPVDASVERILRQETERNHTATHLLHAALRRILGSHVQQKGSFVTSERLRFDFSHFSKMTPEEIQAVEAEVNEHIRCAAHVSKHADLPYDEAIAKGALAFFGDKYAERVRMVEVPGISAELCGGTHVDNIGQIGIFKIISESSAAAGIRRIEALTGRAAEMLLWKEYHELQDVRQQLKLKADEAVAEKLAELQEEKKELEKELAGLKSASVIDALVRDATSAEEIGGCRIVTKVLEGVDADTLRSAAMALREKLPVSAGLLCSIADGKVSLAAFSSDVAVKEKGIDAGKLIRLAAAAVKGGGGGRAELATAGGKNPDGVAEACRIFAEDVRRIAGAV.

Residues 425 to 441 (MQEQKSRARSDRREKQQ) are compositionally biased toward basic and acidic residues. Residues 425–448 (MQEQKSRARSDRREKQQTGDGAGS) are disordered. Zn(2+) contacts are provided by His-569, His-573, Cys-672, and His-676.

It belongs to the class-II aminoacyl-tRNA synthetase family. Requires Zn(2+) as cofactor.

It localises to the cytoplasm. The enzyme catalyses tRNA(Ala) + L-alanine + ATP = L-alanyl-tRNA(Ala) + AMP + diphosphate. Catalyzes the attachment of alanine to tRNA(Ala) in a two-step reaction: alanine is first activated by ATP to form Ala-AMP and then transferred to the acceptor end of tRNA(Ala). Also edits incorrectly charged Ser-tRNA(Ala) and Gly-tRNA(Ala) via its editing domain. The polypeptide is Alanine--tRNA ligase (Chlorobium luteolum (strain DSM 273 / BCRC 81028 / 2530) (Pelodictyon luteolum)).